The chain runs to 173 residues: NADH-ubiquinone oxidoreductase chain 6 (173 aa).

The next 5 membrane-spanning stretches (helical) occupy residues 1 to 21 (MTYF…AVAS), 27 to 47 (YGVV…LSLG), 48 to 68 (VSFV…VVFV), 87 to 107 (VVGY…VGGF), and 139 to 159 (CGVG…FVVL).

This sequence belongs to the complex I subunit 6 family.

Its subcellular location is the mitochondrion membrane. It carries out the reaction a ubiquinone + NADH + 5 H(+)(in) = a ubiquinol + NAD(+) + 4 H(+)(out). Core subunit of the mitochondrial membrane respiratory chain NADH dehydrogenase (Complex I) that is believed to belong to the minimal assembly required for catalysis. Complex I functions in the transfer of electrons from NADH to the respiratory chain. The immediate electron acceptor for the enzyme is believed to be ubiquinone. The sequence is that of NADH-ubiquinone oxidoreductase chain 6 (MT-ND6) from Aethia cristatella (Crested auklet).